The primary structure comprises 1482 residues: Glutamate receptor ionotropic, NMDA 2B (1482 aa).

The N-terminal stretch at 1–26 (MKPSAECCSPKFWLVLAVLAVSGSKA) is a signal peptide. Residues 27-557 (RSQKSPPSIG…SAFLEPFSAD (531 aa)) are Extracellular-facing. Asn74 carries N-linked (GlcNAc...) asparagine glycosylation. Residues Cys86 and Cys321 are joined by a disulfide bond. Residues His127 and Glu284 each coordinate Zn(2+). Residues Asn341, Asn348, Asn444, and Asn491 are each glycosylated (N-linked (GlcNAc...) asparagine). 2 disulfide bridges follow: Cys429–Cys456 and Cys436–Cys457. L-glutamate contacts are provided by Thr514 and Arg519. The N-linked (GlcNAc...) asparagine glycan is linked to Asn542. The helical transmembrane segment at 558 to 576 (VWVMMFVMLLIVSAVAVFV) threads the bilayer. Topologically, residues 577 to 603 (FEYFSPVGYNRCLADGREPGGPSFTIG) are cytoplasmic. Residues 604–623 (KAIWLLWGLVFNNSVPVQNP) constitute an intramembrane region (discontinuously helical). Positions 604-623 (KAIWLLWGLVFNNSVPVQNP) are pore-forming. The Cytoplasmic portion of the chain corresponds to 624–630 (KGTTSKI). A helical membrane pass occupies residues 631–646 (MVSVWAFFAVIFLASY). Residues 647–817 (TANLAAFMIQ…VMSSQLDIDN (171 aa)) are Extracellular-facing. An N-linked (GlcNAc...) asparagine glycan is attached at Asn688. L-glutamate is bound by residues Ser690, Thr691, and Asp732. A disulfide bond links Cys746 and Cys801. A helical membrane pass occupies residues 818–837 (MAGVFYMLGAAMALSLITFI). Over 838–1482 (CEHLFYWQFR…EKLSSIESDV (645 aa)) the chain is Cytoplasmic. Residues Ser882, Ser886, Ser917, and Ser920 each carry the phosphoserine modification. Phosphotyrosine occurs at positions 962 and 1039. Phosphoserine is present on residues Ser1058, Ser1061, and Ser1064. A phosphotyrosine mark is found at Tyr1109 and Tyr1133. The residue at position 1143 (Ser1143) is a Phosphoserine. Residue Tyr1155 is modified to Phosphotyrosine. The tract at residues 1161–1194 (DFKRDSVSGGGPCTNRSHLKHGTGEKHGVVGGVP) is disordered. Phosphoserine is present on residues Ser1255 and Ser1259. A disordered region spans residues 1269-1301 (PVAVTSNASSTKYPQSPTNSKAQKKNRNKLRRQ). The segment covering 1272–1289 (VTSNASSTKYPQSPTNSK) has biased composition (polar residues). Over residues 1290 to 1301 (AQKKNRNKLRRQ) the composition is skewed to basic residues. Positions 1292-1304 (KKNRNKLRRQHSY) are interaction with DAPK1. Ser1303 carries the post-translational modification Phosphoserine. Residue Tyr1472 is modified to Phosphotyrosine. The PDZ-binding motif lies at 1480 to 1482 (SDV).

It belongs to the glutamate-gated ion channel (TC 1.A.10.1) family. NR2B/GRIN2B subfamily. As to quaternary structure, heterotetramer. Forms heterotetrameric channels composed of two GluN1/zeta subunits (GRIN1), and two identical GluN2/epsilon subunits (GRIN2A, GRIN2B, GRIN2C or GRIN2D) or GluN3 subunits (GRIN3A or GRIN3B) (in vitro). Can also form heterotetrameric channels that contain at least two GluN1 subunits and at least two different GluN2 subunits (or a combination of one GluN2 and one GluN3 subunits) (in vitro). In vivo, the subunit composition may depend on the expression levels of the different subunits. Found in a complex with GRIN1, GRIN3A and PPP2CB. Found in a complex with GRIN1 and GRIN3B. Interacts with MAGI3. Interacts with HIP1 and NETO1. Interacts with PDZ domains of PATJ, DLG3 and DLG4. Interacts with DAPK1. Found in a complex with GRIN1 and PRR7. Interacts with PRR7. Interacts with CAMK2A. Interacts with ARC; preventing ARC oligomerization. Interacts with TMEM25. Interacts (via the extreme C-terminus) with FRMPD2 (via the second PDZ domain); the interaction is direct and is likely to promote NMDAR-mediated neural signal transmission. Interacts with FAM81A; the interaction facilitates condensate formation via liquid-liquid phase separation. Post-translationally, phosphorylated on tyrosine residues. Phosphorylation at Ser-1303 by DAPK1 enhances synaptic NMDA receptor channel activity. Expressed in the hippocampus including the dentate gyrus (at protein level). Detected in adult olfactory bulb, brain cortex, hippocampus, striatum, thalamus, superior colliculus, with much lower levels in inferior colliculus, midbrain and cerebellum.

Its subcellular location is the cell membrane. The protein resides in the postsynaptic cell membrane. The protein localises to the late endosome. It is found in the lysosome. It localises to the cytoplasm. Its subcellular location is the cytoskeleton. The catalysed reaction is Ca(2+)(in) = Ca(2+)(out). The enzyme catalyses Na(+)(in) = Na(+)(out). It catalyses the reaction K(+)(in) = K(+)(out). NMDA glutamate receptor activity is inhibited by micromolar levels of zinc ions. NMDA glutamate receptor activity is inhibited by ifenprodil. Component of N-methyl-D-aspartate (NMDA) receptors (NMDARs) that function as heterotetrameric, ligand-gated cation channels with high calcium permeability and voltage-dependent block by Mg(2+). Participates in synaptic plasticity for learning and memory formation by contributing to the long-term depression (LTD) of hippocampus membrane currents. Channel activation requires binding of the neurotransmitter L-glutamate to the GluN2 subunit, glycine or D-serine binding to the GluN1 subunit, plus membrane depolarization to eliminate channel inhibition by Mg(2+). NMDARs mediate simultaneously the potasium efflux and the influx of calcium and sodium. Each GluN2 subunit confers differential attributes to channel properties, including activation, deactivation and desensitization kinetics, pH sensitivity, Ca2(+) permeability, and binding to allosteric modulators. In concert with DAPK1 at extrasynaptic sites, acts as a central mediator for stroke damage. Its phosphorylation at Ser-1303 by DAPK1 enhances synaptic NMDA receptor channel activity inducing injurious Ca2+ influx through them, resulting in an irreversible neuronal death. The protein is Glutamate receptor ionotropic, NMDA 2B of Rattus norvegicus (Rat).